A 472-amino-acid chain; its full sequence is UDP-N-acetylmuramate--L-alanine ligase (472 aa).

Position 118–124 (118–124 (GTHGKTT)) interacts with ATP.

The protein belongs to the MurCDEF family.

The protein resides in the cytoplasm. The catalysed reaction is UDP-N-acetyl-alpha-D-muramate + L-alanine + ATP = UDP-N-acetyl-alpha-D-muramoyl-L-alanine + ADP + phosphate + H(+). Its pathway is cell wall biogenesis; peptidoglycan biosynthesis. Its function is as follows. Cell wall formation. The protein is UDP-N-acetylmuramate--L-alanine ligase of Methylococcus capsulatus (strain ATCC 33009 / NCIMB 11132 / Bath).